A 459-amino-acid polypeptide reads, in one-letter code: tRNA modification GTPase MnmE (459 aa).

(6S)-5-formyl-5,6,7,8-tetrahydrofolate contacts are provided by Arg20, Glu85, and Arg124. One can recognise a TrmE-type G domain in the interval 221 to 380 (GISTVIIGRP…LEEAIQSLFF (160 aa)). K(+) is bound at residue Asn231. Residues 231-236 (NVGKSS), 250-256 (TDIPGTT), and 275-278 (DTAG) contribute to the GTP site. Ser235 contributes to the Mg(2+) binding site. K(+)-binding residues include Thr250, Ile252, and Thr255. Thr256 contributes to the Mg(2+) binding site. Lys459 is a binding site for (6S)-5-formyl-5,6,7,8-tetrahydrofolate.

It belongs to the TRAFAC class TrmE-Era-EngA-EngB-Septin-like GTPase superfamily. TrmE GTPase family. Homodimer. Heterotetramer of two MnmE and two MnmG subunits. K(+) is required as a cofactor.

It localises to the cytoplasm. Exhibits a very high intrinsic GTPase hydrolysis rate. Involved in the addition of a carboxymethylaminomethyl (cmnm) group at the wobble position (U34) of certain tRNAs, forming tRNA-cmnm(5)s(2)U34. The sequence is that of tRNA modification GTPase MnmE from Bacillus licheniformis (strain ATCC 14580 / DSM 13 / JCM 2505 / CCUG 7422 / NBRC 12200 / NCIMB 9375 / NCTC 10341 / NRRL NRS-1264 / Gibson 46).